The chain runs to 240 residues: RNA polymerase sigma factor SigI (240 aa).

The Polymerase core binding motif lies at 56–69; that stretch reads DEYSIGLFAFNEAI. A DNA-binding region (H-T-H motif) is located at residues 194–213; it reads LKHIEPRVRVSRKTLERHRK.

Belongs to the sigma-70 factor family. SigI subfamily. As to quaternary structure, interacts with RsgI.

The protein localises to the cytoplasm. With respect to regulation, negatively regulated by the anti-sigma-I factor RsgI. Functionally, sigma factors are initiation factors that promote the attachment of RNA polymerase to specific initiation sites and are then released. This sigma factor contributes to both stress response and virulence gene expression. The sequence is that of RNA polymerase sigma factor SigI from Bacillus anthracis.